An 85-amino-acid polypeptide reads, in one-letter code: MGLLDFLKSKKNTAETAKNRLQIIIAQERNHRGGPDYLPLMQRELLEVIKKYVNIDADAVRVDLVKDGEHDVLDISVALPEDGDK.

The protein belongs to the MinE family.

Its function is as follows. Prevents the cell division inhibition by proteins MinC and MinD at internal division sites while permitting inhibition at polar sites. This ensures cell division at the proper site by restricting the formation of a division septum at the midpoint of the long axis of the cell. The polypeptide is Cell division topological specificity factor (Xanthomonas euvesicatoria pv. vesicatoria (strain 85-10) (Xanthomonas campestris pv. vesicatoria)).